Reading from the N-terminus, the 78-residue chain is Cytochrome c oxidase subunit 6b-2 (78 aa).

In terms of domain architecture, CHCH spans 22–65; that stretch reads TRHCFTRYIEFHRCTTAKGEESNDCERFAKYYRALCPGEWVDKW. A Cx9C motif motif is present at residues 25–35; it reads CFTRYIEFHRC. 2 cysteine pairs are disulfide-bonded: Cys25-Cys57 and Cys35-Cys46. The Cx10C motif signature appears at 46 to 57; sequence CERFAKYYRALC.

The protein belongs to the cytochrome c oxidase subunit 6B (TC 3.D.4.8) family. Specifically expressed in roots.

The protein localises to the mitochondrion. Functionally, this protein is one of the nuclear-coded polypeptide chains of cytochrome c oxidase, the terminal oxidase in mitochondrial electron transport. This protein may be one of the heme-binding subunits of the oxidase. This chain is Cytochrome c oxidase subunit 6b-2 (COX6B-2), found in Arabidopsis thaliana (Mouse-ear cress).